The chain runs to 150 residues: FAD synthase (150 aa).

ATP is bound by residues 11–12 (TF), 16–19 (HPGH), D96, and Y124.

Belongs to the archaeal FAD synthase family. Homodimer. It depends on a divalent metal cation as a cofactor.

The catalysed reaction is FMN + ATP + H(+) = FAD + diphosphate. It participates in cofactor biosynthesis; FAD biosynthesis; FAD from FMN: step 1/1. In terms of biological role, catalyzes the transfer of the AMP portion of ATP to flavin mononucleotide (FMN) to produce flavin adenine dinucleotide (FAD) coenzyme. This is FAD synthase from Methanocaldococcus fervens (strain DSM 4213 / JCM 15782 / AG86) (Methanococcus fervens).